The primary structure comprises 333 residues: Protoheme IX farnesyltransferase (333 aa).

The next 7 helical transmembrane spans lie at 64 to 84 (LICT…LNCL), 110 to 130 (TVFL…VSGV), 133 to 153 (LAAG…TVIL), 161 to 181 (IVFG…AATG), 189 to 209 (WLFG…AILL), 246 to 266 (IMGV…LLPF), and 287 to 307 (AKSL…LLLI).

Belongs to the UbiA prenyltransferase family. Protoheme IX farnesyltransferase subfamily.

It is found in the cell inner membrane. The catalysed reaction is heme b + (2E,6E)-farnesyl diphosphate + H2O = Fe(II)-heme o + diphosphate. The protein operates within porphyrin-containing compound metabolism; heme O biosynthesis; heme O from protoheme: step 1/1. Functionally, converts heme B (protoheme IX) to heme O by substitution of the vinyl group on carbon 2 of heme B porphyrin ring with a hydroxyethyl farnesyl side group. The protein is Protoheme IX farnesyltransferase of Prochlorococcus marinus (strain MIT 9215).